A 191-amino-acid chain; its full sequence is Holliday junction branch migration complex subunit RuvA (191 aa).

The segment at 1–64 (MIGRLSGVLL…EDAHILFGFG (64 aa)) is domain I. Residues 65 to 137 (TNEERNVFKQ…LKGKLGADLG (73 aa)) form a domain II region. Residues 137–141 (GVAGA) are flexible linker. A domain III region spans residues 142–191 (VATDATSDILNALLALGYSDKEAMLALKQVPAGTGVSDGIKLALKSLSKA).

It belongs to the RuvA family. As to quaternary structure, homotetramer. Forms an RuvA(8)-RuvB(12)-Holliday junction (HJ) complex. HJ DNA is sandwiched between 2 RuvA tetramers; dsDNA enters through RuvA and exits via RuvB. An RuvB hexamer assembles on each DNA strand where it exits the tetramer. Each RuvB hexamer is contacted by two RuvA subunits (via domain III) on 2 adjacent RuvB subunits; this complex drives branch migration. In the full resolvosome a probable DNA-RuvA(4)-RuvB(12)-RuvC(2) complex forms which resolves the HJ.

It is found in the cytoplasm. The RuvA-RuvB-RuvC complex processes Holliday junction (HJ) DNA during genetic recombination and DNA repair, while the RuvA-RuvB complex plays an important role in the rescue of blocked DNA replication forks via replication fork reversal (RFR). RuvA specifically binds to HJ cruciform DNA, conferring on it an open structure. The RuvB hexamer acts as an ATP-dependent pump, pulling dsDNA into and through the RuvAB complex. HJ branch migration allows RuvC to scan DNA until it finds its consensus sequence, where it cleaves and resolves the cruciform DNA. The chain is Holliday junction branch migration complex subunit RuvA from Janthinobacterium sp. (strain Marseille) (Minibacterium massiliensis).